Consider the following 391-residue polypeptide: Mannonate dehydratase (391 aa).

The interval Glu334 to Leu359 is disordered.

Belongs to the mannonate dehydratase family. It depends on Fe(2+) as a cofactor. Requires Mn(2+) as cofactor.

It catalyses the reaction D-mannonate = 2-dehydro-3-deoxy-D-gluconate + H2O. Its pathway is carbohydrate metabolism; pentose and glucuronate interconversion. Functionally, catalyzes the dehydration of D-mannonate. In Chromohalobacter salexigens (strain ATCC BAA-138 / DSM 3043 / CIP 106854 / NCIMB 13768 / 1H11), this protein is Mannonate dehydratase.